The following is a 445-amino-acid chain: Bifunctional protein GlmU (445 aa).

The segment at 1–218 (MRALVLAAGK…LLEITGVNTR (218 aa)) is pyrophosphorylase. UDP-N-acetyl-alpha-D-glucosamine-binding positions include 6 to 9 (LAAG), K20, Q69, 74 to 75 (GT), 96 to 98 (YGD), G134, E147, N162, and N216. D98 serves as a coordination point for Mg(2+). N216 lines the Mg(2+) pocket. The segment at 219–239 (KTLVWLEEQLRMRKIEELLEN) is linker. The N-acetyltransferase stretch occupies residues 240–445 (GVTILDPATT…GWVLKKRKEE (206 aa)). UDP-N-acetyl-alpha-D-glucosamine-binding residues include R321 and K339. The active-site Proton acceptor is the H351. UDP-N-acetyl-alpha-D-glucosamine-binding residues include Y354 and N365. Residues A368, 374–375 (NY), S393, A411, and R428 each bind acetyl-CoA.

In the N-terminal section; belongs to the N-acetylglucosamine-1-phosphate uridyltransferase family. It in the C-terminal section; belongs to the transferase hexapeptide repeat family. As to quaternary structure, homotrimer. Mg(2+) is required as a cofactor.

Its subcellular location is the cytoplasm. The enzyme catalyses alpha-D-glucosamine 1-phosphate + acetyl-CoA = N-acetyl-alpha-D-glucosamine 1-phosphate + CoA + H(+). The catalysed reaction is N-acetyl-alpha-D-glucosamine 1-phosphate + UTP + H(+) = UDP-N-acetyl-alpha-D-glucosamine + diphosphate. The protein operates within nucleotide-sugar biosynthesis; UDP-N-acetyl-alpha-D-glucosamine biosynthesis; N-acetyl-alpha-D-glucosamine 1-phosphate from alpha-D-glucosamine 6-phosphate (route II): step 2/2. It functions in the pathway nucleotide-sugar biosynthesis; UDP-N-acetyl-alpha-D-glucosamine biosynthesis; UDP-N-acetyl-alpha-D-glucosamine from N-acetyl-alpha-D-glucosamine 1-phosphate: step 1/1. Its pathway is bacterial outer membrane biogenesis; LPS lipid A biosynthesis. In terms of biological role, catalyzes the last two sequential reactions in the de novo biosynthetic pathway for UDP-N-acetylglucosamine (UDP-GlcNAc). The C-terminal domain catalyzes the transfer of acetyl group from acetyl coenzyme A to glucosamine-1-phosphate (GlcN-1-P) to produce N-acetylglucosamine-1-phosphate (GlcNAc-1-P), which is converted into UDP-GlcNAc by the transfer of uridine 5-monophosphate (from uridine 5-triphosphate), a reaction catalyzed by the N-terminal domain. This Thermotoga petrophila (strain ATCC BAA-488 / DSM 13995 / JCM 10881 / RKU-1) protein is Bifunctional protein GlmU.